Reading from the N-terminus, the 273-residue chain is Dermonecrotic toxin LapSicTox-alphaIB1b2 (273 aa).

The active site involves His-5. The Mg(2+) site is built by Glu-25 and Asp-27. Residue His-41 is the Nucleophile of the active site. Cystine bridges form between Cys-45-Cys-51 and Cys-47-Cys-190. Asp-85 contributes to the Mg(2+) binding site. Residue Asn-250 is glycosylated (N-linked (GlcNAc...) asparagine).

It belongs to the arthropod phospholipase D family. Class II subfamily. Mg(2+) is required as a cofactor. As to expression, expressed by the venom gland.

Its subcellular location is the secreted. It catalyses the reaction an N-(acyl)-sphingosylphosphocholine = an N-(acyl)-sphingosyl-1,3-cyclic phosphate + choline. The enzyme catalyses an N-(acyl)-sphingosylphosphoethanolamine = an N-(acyl)-sphingosyl-1,3-cyclic phosphate + ethanolamine. It carries out the reaction a 1-acyl-sn-glycero-3-phosphocholine = a 1-acyl-sn-glycero-2,3-cyclic phosphate + choline. The catalysed reaction is a 1-acyl-sn-glycero-3-phosphoethanolamine = a 1-acyl-sn-glycero-2,3-cyclic phosphate + ethanolamine. Dermonecrotic toxins cleave the phosphodiester linkage between the phosphate and headgroup of certain phospholipids (sphingolipid and lysolipid substrates), forming an alcohol (often choline) and a cyclic phosphate. This toxin acts on sphingomyelin (SM). It may also act on ceramide phosphoethanolamine (CPE), lysophosphatidylcholine (LPC) and lysophosphatidylethanolamine (LPE), but not on lysophosphatidylserine (LPS), and lysophosphatidylglycerol (LPG). It acts by transphosphatidylation, releasing exclusively cyclic phosphate products as second products. Induces dermonecrosis, hemolysis, increased vascular permeability, edema, inflammatory response, and platelet aggregation. The sequence is that of Dermonecrotic toxin LapSicTox-alphaIB1b2 from Loxosceles apachea (Apache recluse spider).